Consider the following 159-residue polypeptide: Capsid protein (159 aa).

This sequence belongs to the virgaviridae capsid protein family.

The protein resides in the virion. Functionally, capsid protein self-assembles to form rod-shaped virions about 18 nm in diameter with a central canal enclosing the viral genomic RNA. This chain is Capsid protein (CP), found in Tobacco mild green mosaic virus (TMGMV).